We begin with the raw amino-acid sequence, 278 residues long: Expansin-B17 (278 aa).

Residues 1–26 form the signal peptide; it reads MAAASSRSFSLCVLLLLLLLAPPISA. The Expansin-like EG45 domain maps to 66–176; that stretch reads GGACGYGSLV…RRTACKYGGK (111 aa). Cystine bridges form between Cys-69-Cys-98, Cys-101-Cys-171, and Cys-106-Cys-112. Residues 189–270 form the Expansin-like CBD domain; it reads FWLSLLVEFE…NWKPTATYTS (82 aa).

It belongs to the expansin family. Expansin B subfamily.

The protein localises to the secreted. Its subcellular location is the cell wall. It localises to the membrane. May cause loosening and extension of plant cell walls by disrupting non-covalent bonding between cellulose microfibrils and matrix glucans. No enzymatic activity has been found. May be required for rapid internodal elongation in deepwater rice during submergence. The polypeptide is Expansin-B17 (EXPB17) (Oryza sativa subsp. japonica (Rice)).